Consider the following 234-residue polypeptide: Sugar fermentation stimulation protein homolog (234 aa).

Belongs to the SfsA family.

The polypeptide is Sugar fermentation stimulation protein homolog (Shewanella frigidimarina (strain NCIMB 400)).